The primary structure comprises 906 residues: Catenin alpha-1 (906 aa).

Residue Thr-2 is modified to N-acetylthreonine. Residues 2–228 (TAVHTGNINF…PILYTASQAC (227 aa)) are involved in homodimerization. Lys-57 participates in a covalent cross-link: Glycyl lysine isopeptide (Lys-Gly) (interchain with G-Cter in SUMO2). The interaction with JUP and CTNNB1 stretch occupies residues 97-148 (VRKQCDLMKSAAGEFADDPCSSVKRGNMVRAARALLSAVTRLLILADMADVY). Residues Ser-264, Ser-268, Ser-295, and Ser-297 each carry the phosphoserine modification. Residues 325–394 (TRDDRRERIV…AVMDHVSDSF (70 aa)) are interaction with alpha-actinin. A Phosphothreonine modification is found at Thr-634. Ser-641 bears the Phosphoserine mark. Thr-645 is subject to Phosphothreonine. Residues Ser-652 and Ser-655 each carry the phosphoserine modification. Thr-658 is modified (phosphothreonine). A Glycyl lysine isopeptide (Lys-Gly) (interchain with G-Cter in SUMO2) cross-link involves residue Lys-797. Ser-851 is modified (phosphoserine). Over residues 864–880 (PEKKPLVKREKQDETQT) the composition is skewed to basic and acidic residues. A disordered region spans residues 864–894 (PEKKPLVKREKQDETQTKIKRASQKKHVNPV). Over residues 881 to 891 (KIKRASQKKHV) the composition is skewed to basic residues.

Belongs to the vinculin/alpha-catenin family. In terms of assembly, monomer and homodimer; the monomer preferentially binds to CTNNB1 and the homodimer to actin. Component of an cadherin:catenin adhesion complex composed of at least of CDH26, beta-catenin/CTNNB1, alpha-catenin/CTNNA1 and p120 catenin/CTNND1. Possible component of an E-cadherin/ catenin adhesion complex together with E-cadherin/CDH1 and beta-catenin/CTNNB1 or gamma-catenin/JUP; the complex is located to adherens junctions. The stable association of CTNNA1 is controversial as CTNNA1 was shown not to bind to F-actin when assembled in the complex. Alternatively, the CTNNA1-containing complex may be linked to F-actin by other proteins such as LIMA1. Binds AFDN and F-actin. Interacts with ARHGAP21. Interacts with AJUBA. Interacts with LIMA1. Interacts with vinculin/VCL. Interacts with TJP2/ZO2 (via N-terminus). Interacts with TJP1/ZO1 (via N-terminus). In terms of processing, sumoylated. Post-translationally, phosphorylation seems to contribute to the strength of cell-cell adhesion rather than to the basic capacity for cell-cell adhesion.

Its subcellular location is the cytoplasm. It localises to the cytoskeleton. It is found in the cell junction. The protein localises to the adherens junction. The protein resides in the cell membrane. Its subcellular location is the nucleus. In terms of biological role, associates with the cytoplasmic domain of a variety of cadherins. The association of catenins to cadherins produces a complex which is linked to the actin filament network, and which seems to be of primary importance for cadherins cell-adhesion properties. Can associate with both E- and N-cadherins. Originally believed to be a stable component of E-cadherin/catenin adhesion complexes and to mediate the linkage of cadherins to the actin cytoskeleton at adherens junctions. In contrast, cortical actin was found to be much more dynamic than E-cadherin/catenin complexes and CTNNA1 was shown not to bind to F-actin when assembled in the complex suggesting a different linkage between actin and adherens junctions components. The homodimeric form may regulate actin filament assembly and inhibit actin branching by competing with the Arp2/3 complex for binding to actin filaments. Involved in the regulation of WWTR1/TAZ, YAP1 and TGFB1-dependent SMAD2 and SMAD3 nuclear accumulation. May play a crucial role in cell differentiation. This Bos taurus (Bovine) protein is Catenin alpha-1.